A 260-amino-acid chain; its full sequence is Type III pantothenate kinase (260 aa).

ATP is bound at residue 6–13; that stretch reads DAGNTRIK. Residues Y100 and 107 to 110 contribute to the substrate site; that span reads GADR. Catalysis depends on D109, which acts as the Proton acceptor. T133 lines the ATP pocket. T186 contributes to the substrate binding site.

It belongs to the type III pantothenate kinase family. In terms of assembly, homodimer. NH4(+) serves as cofactor. K(+) is required as a cofactor.

The protein resides in the cytoplasm. The catalysed reaction is (R)-pantothenate + ATP = (R)-4'-phosphopantothenate + ADP + H(+). It participates in cofactor biosynthesis; coenzyme A biosynthesis; CoA from (R)-pantothenate: step 1/5. Catalyzes the phosphorylation of pantothenate (Pan), the first step in CoA biosynthesis. This chain is Type III pantothenate kinase, found in Janthinobacterium sp. (strain Marseille) (Minibacterium massiliensis).